A 328-amino-acid polypeptide reads, in one-letter code: Radiation response metalloprotease IrrE (328 aa).

Residues M1 to H31 form a disordered region. H118 is a binding site for Zn(2+). Residue E119 is part of the active site. Residues H122 and E149 each contribute to the Zn(2+) site. Disordered stretches follow at residues P217 to R238 and R309 to Q328.

Plays a central regulatory role in DNA repair and protection pathways in response to radiation stress. Acts as a site-specific metalloprotease that cleaves and inactivates the repressor protein DdrO, resulting in induced expression of genes required for DNA repair and cell survival after exposure to radiation. Regulates the expression of dozens of proteins from different pathways, including the important DNA repair proteins RecA and PprA. Binds to the promoters of recA and pprA. The chain is Radiation response metalloprotease IrrE from Deinococcus radiodurans (strain ATCC 13939 / DSM 20539 / JCM 16871 / CCUG 27074 / LMG 4051 / NBRC 15346 / NCIMB 9279 / VKM B-1422 / R1).